The following is a 280-amino-acid chain: UDP-2,3-diacylglucosamine pyrophosphatase LpxI (280 aa).

Substrate contacts are provided by residues A12, 74–75, Q169, 187–188, K214, and 226–233; these read NV, TD, and LPTIGVAT.

The protein belongs to the LpxI family. As to quaternary structure, homodimer. It depends on Mg(2+) as a cofactor.

Its subcellular location is the cell inner membrane. It carries out the reaction UDP-2-N,3-O-bis[(3R)-3-hydroxytetradecanoyl]-alpha-D-glucosamine + H2O = 2-N,3-O-bis[(3R)-3-hydroxytetradecanoyl]-alpha-D-glucosaminyl 1-phosphate + UMP + 2 H(+). It functions in the pathway glycolipid biosynthesis; lipid IV(A) biosynthesis; lipid IV(A) from (3R)-3-hydroxytetradecanoyl-[acyl-carrier-protein] and UDP-N-acetyl-alpha-D-glucosamine: step 4/6. With respect to regulation, inhibited by high concentrations of Cu(2+) and Zn(2+). Completely inhibited by EDTA in vitro. Hydrolyzes the pyrophosphate bond of UDP-2,3-diacylglucosamine to form 2,3-diacylglucosamine 1-phosphate (lipid X) and UMP by catalyzing the attack of water at the beta-P atom. Involved in the biosynthesis of lipid A, a phosphorylated glycolipid that anchors the lipopolysaccharide to the outer membrane of the cell. Can functionally complement lpxH deficiency in E.coli. Cannot use CDP-diacylglycerol as substrate. In Caulobacter vibrioides (strain ATCC 19089 / CIP 103742 / CB 15) (Caulobacter crescentus), this protein is UDP-2,3-diacylglucosamine pyrophosphatase LpxI.